We begin with the raw amino-acid sequence, 112 residues long: MYB-like transcription factor ETC2 (112 aa).

The region spanning Thr41–Trp78 is the Myb-like domain.

Interacts with GL3. Expressed in stomatal guard mother cells, young stomata and trichomes of young leaves, and inflorescences.

The protein resides in the nucleus. In terms of biological role, MYB-type transcription factor involved in epidermal cell fate specification. Acts as a negative regulator of trichome development, by mediating lateral inhibition. Promotes the formation of hair developing cells in H position in root epidermis, probably by inhibiting non-hair cell formation. The sequence is that of MYB-like transcription factor ETC2 (ETC2) from Arabidopsis thaliana (Mouse-ear cress).